Reading from the N-terminus, the 217-residue chain is Glycosylphosphatidylinositol anchor biosynthesis protein 11 (217 aa).

6 helical membrane-spanning segments follow: residues 45-61 (TWQT…YWFI), 74-94 (WLLV…ATVY), 111-131 (VTCI…GAPF), 138-158 (TWLL…SVLN), 169-189 (YFIS…LDWD), and 195-215 (WPIP…TFCS).

This sequence belongs to the PIGF family.

It is found in the endoplasmic reticulum membrane. Its pathway is glycolipid biosynthesis; glycosylphosphatidylinositol-anchor biosynthesis. Functionally, acts in the GPI biosynthetic pathway between GlcNAc-PI synthesis and GPI transfer to protein. The chain is Glycosylphosphatidylinositol anchor biosynthesis protein 11 (GPI11) from Eremothecium gossypii (strain ATCC 10895 / CBS 109.51 / FGSC 9923 / NRRL Y-1056) (Yeast).